The primary structure comprises 250 residues: Flap endonuclease Xni (250 aa).

Residue Asp104 coordinates Mg(2+). A 5'-3' exonuclease domain is found at 160–249 (VQPQQLTDFW…LQGNLQQLRL (90 aa)). Positions 171, 172, 180, 182, and 185 each coordinate K(+). The segment at 184 to 189 (GIGPKS) is interaction with DNA.

The protein belongs to the Xni family. Mg(2+) serves as cofactor. It depends on K(+) as a cofactor.

Functionally, has flap endonuclease activity. During DNA replication, flap endonucleases cleave the 5'-overhanging flap structure that is generated by displacement synthesis when DNA polymerase encounters the 5'-end of a downstream Okazaki fragment. This Sodalis glossinidius (strain morsitans) protein is Flap endonuclease Xni.